The sequence spans 313 residues: Pyrimidine-specific ribonucleoside hydrolase RihB (313 aa).

D11 functions as the Proton acceptor in the catalytic mechanism. Ca(2+) is bound by residues D11, D16, and V124. Substrate contacts are provided by Q227 and H239. D240 is a binding site for Ca(2+).

This sequence belongs to the IUNH family. RihB subfamily. As to quaternary structure, homotetramer. The cofactor is Ca(2+).

It carries out the reaction a pyrimidine ribonucleoside + H2O = a pyrimidine nucleobase + D-ribose. Hydrolyzes cytidine or uridine to ribose and cytosine or uracil, respectively. Has a clear preference for cytidine over uridine. Strictly specific for ribonucleosides. The chain is Pyrimidine-specific ribonucleoside hydrolase RihB from Escherichia coli O157:H7.